The chain runs to 333 residues: Putative ketol-acid reductoisomerase 2 (333 aa).

In terms of domain architecture, KARI N-terminal Rossmann spans 1 to 182 (MDKTVLDANL…AIPGGIAVIS (182 aa)). Positions 183 to 329 (SFEEEALLDL…KELYKLLGRK (147 aa)) constitute a KARI C-terminal knotted domain.

The protein belongs to the ketol-acid reductoisomerase family.

It carries out the reaction (2R)-2,3-dihydroxy-3-methylbutanoate + NADP(+) = (2S)-2-acetolactate + NADPH + H(+). It catalyses the reaction (2R,3R)-2,3-dihydroxy-3-methylpentanoate + NADP(+) = (S)-2-ethyl-2-hydroxy-3-oxobutanoate + NADPH + H(+). The protein operates within amino-acid biosynthesis; L-isoleucine biosynthesis; L-isoleucine from 2-oxobutanoate: step 2/4. It participates in amino-acid biosynthesis; L-valine biosynthesis; L-valine from pyruvate: step 2/4. The sequence is that of Putative ketol-acid reductoisomerase 2 (ilvC2) from Saccharolobus solfataricus (strain ATCC 35092 / DSM 1617 / JCM 11322 / P2) (Sulfolobus solfataricus).